The following is a 266-amino-acid chain: tRNA dimethylallyltransferase (266 aa).

Belongs to the IPP transferase family. In terms of assembly, monomer. Requires Mg(2+) as cofactor.

The catalysed reaction is adenosine(37) in tRNA + dimethylallyl diphosphate = N(6)-dimethylallyladenosine(37) in tRNA + diphosphate. Functionally, catalyzes the transfer of a dimethylallyl group onto the adenine at position 37 in tRNAs that read codons beginning with uridine, leading to the formation of N6-(dimethylallyl)adenosine (i(6)A). The protein is tRNA dimethylallyltransferase (miaA) of Helicobacter acinonychis (strain Sheeba).